The sequence spans 1241 residues: ATP-dependent helicase/nuclease subunit A (1241 aa).

The region spanning 12–485 (SQWTDDQWKA…IDLAKNFRSR (474 aa)) is the UvrD-like helicase ATP-binding domain. ATP is bound at residue 33–40 (AAAGSGKT). Residues 505-805 (GEIDYDADAE…RIMTIHKSKG (301 aa)) form the UvrD-like helicase C-terminal domain.

It belongs to the helicase family. AddA subfamily. Heterodimer of AddA and AddB/RexB. Mg(2+) is required as a cofactor.

The enzyme catalyses Couples ATP hydrolysis with the unwinding of duplex DNA by translocating in the 3'-5' direction.. It carries out the reaction ATP + H2O = ADP + phosphate + H(+). Its function is as follows. The heterodimer acts as both an ATP-dependent DNA helicase and an ATP-dependent, dual-direction single-stranded exonuclease. Recognizes the chi site generating a DNA molecule suitable for the initiation of homologous recombination. The AddA nuclease domain is required for chi fragment generation; this subunit has the helicase and 3' -&gt; 5' nuclease activities. The sequence is that of ATP-dependent helicase/nuclease subunit A from Bacillus thuringiensis (strain Al Hakam).